Consider the following 290-residue polypeptide: MAMRQCAIYGKGGIGKSTTTQNLVAALAEMGKKVMIVGCDPKADSTRLILHSKAQNTIMEMAAEAGTVEDLELEDVLKAGYGGVKCVESGGPEPGVGCAGRGVITAINFLEEEGAYEDDLDFVFYDVLGDVVCGGFAMPIRENKAQEIYIVCSGEMMAMYAANNISKGIVKYANSGSVRLGGLICNSRNTDREDELIIALANKLGTQMIHFVPRDNVVQRAEIRRMTVIEYDPKAKQADEYRALARKVVDNKLLVIPNPITMDELEELLMEFGIMEVEDESIVGKTAEEV.

10–17 (GKGGIGKS) lines the ATP pocket. Position 98 (C98) interacts with [4Fe-4S] cluster. Position 101 is an ADP-ribosylarginine; by dinitrogenase reductase ADP-ribosyltransferase (R101). C133 contributes to the [4Fe-4S] cluster binding site.

The protein belongs to the NifH/BchL/ChlL family. Homodimer. [4Fe-4S] cluster serves as cofactor. Post-translationally, the reversible ADP-ribosylation of Arg-101 inactivates the nitrogenase reductase and regulates nitrogenase activity.

The catalysed reaction is N2 + 8 reduced [2Fe-2S]-[ferredoxin] + 16 ATP + 16 H2O = H2 + 8 oxidized [2Fe-2S]-[ferredoxin] + 2 NH4(+) + 16 ADP + 16 phosphate + 6 H(+). Nitrogenase holoenzyme is subject to 'conformational protection' by FeSII; under oxidizing conditions FeSII binds to the holoenzyme and reversibly protects it from oxidation. The key enzymatic reactions in nitrogen fixation are catalyzed by the nitrogenase complex, which has 2 components: the iron protein (component 2) and a component 1 which is either a molybdenum-iron protein, a vanadium-iron, or an iron-iron protein. This chain is Nitrogenase iron protein 1 (nifH1), found in Azotobacter vinelandii.